Reading from the N-terminus, the 188-residue chain is Probable manganese efflux pump MntP (188 aa).

A run of 6 helical transmembrane segments spans residues 3-23, 41-61, 66-86, 106-128, 143-163, and 168-188; these read FTAT…ASIG, LIFG…GILA, LEWN…RMII, WLLV…GLAF, ATLI…PMLG, and ILGG…HFHG.

This sequence belongs to the MntP (TC 9.B.29) family.

Its subcellular location is the cell inner membrane. Functionally, probably functions as a manganese efflux pump. The chain is Probable manganese efflux pump MntP from Salmonella typhimurium (strain LT2 / SGSC1412 / ATCC 700720).